Here is a 351-residue protein sequence, read N- to C-terminus: DNA polymerase IV (351 aa).

Residues 4–185 (IIHVDMDCFF…LPLAKIPGVG (182 aa)) enclose the UmuC domain. Positions 8 and 103 each coordinate Mg(2+). Glutamate 104 is a catalytic residue.

Belongs to the DNA polymerase type-Y family. As to quaternary structure, monomer. Requires Mg(2+) as cofactor.

It is found in the cytoplasm. The enzyme catalyses DNA(n) + a 2'-deoxyribonucleoside 5'-triphosphate = DNA(n+1) + diphosphate. Poorly processive, error-prone DNA polymerase involved in untargeted mutagenesis. Copies undamaged DNA at stalled replication forks, which arise in vivo from mismatched or misaligned primer ends. These misaligned primers can be extended by PolIV. Exhibits no 3'-5' exonuclease (proofreading) activity. May be involved in translesional synthesis, in conjunction with the beta clamp from PolIII. The protein is DNA polymerase IV of Salmonella arizonae (strain ATCC BAA-731 / CDC346-86 / RSK2980).